The sequence spans 118 residues: uncharacterized protein (118 aa).

A disulfide bridge links C11 with C14.

The protein belongs to the ArsC family.

This is an uncharacterized protein from Bacillus subtilis (strain 168).